A 318-amino-acid chain; its full sequence is Acetyl-coenzyme A carboxylase carboxyl transferase subunit alpha (318 aa).

One can recognise a CoA carboxyltransferase C-terminal domain in the interval 31 to 292 (DLTNEIEKLE…NKTITKSLHA (262 aa)).

It belongs to the AccA family. In terms of assembly, acetyl-CoA carboxylase is a heterohexamer composed of biotin carboxyl carrier protein (AccB), biotin carboxylase (AccC) and two subunits each of ACCase subunit alpha (AccA) and ACCase subunit beta (AccD).

It localises to the cytoplasm. It catalyses the reaction N(6)-carboxybiotinyl-L-lysyl-[protein] + acetyl-CoA = N(6)-biotinyl-L-lysyl-[protein] + malonyl-CoA. The protein operates within lipid metabolism; malonyl-CoA biosynthesis; malonyl-CoA from acetyl-CoA: step 1/1. Its function is as follows. Component of the acetyl coenzyme A carboxylase (ACC) complex. First, biotin carboxylase catalyzes the carboxylation of biotin on its carrier protein (BCCP) and then the CO(2) group is transferred by the carboxyltransferase to acetyl-CoA to form malonyl-CoA. The protein is Acetyl-coenzyme A carboxylase carboxyl transferase subunit alpha of Listeria monocytogenes serotype 4a (strain HCC23).